Consider the following 115-residue polypeptide: Large ribosomal subunit protein bL19 (115 aa).

The protein belongs to the bacterial ribosomal protein bL19 family.

Functionally, this protein is located at the 30S-50S ribosomal subunit interface and may play a role in the structure and function of the aminoacyl-tRNA binding site. This chain is Large ribosomal subunit protein bL19, found in Buchnera aphidicola subsp. Acyrthosiphon pisum (strain Tuc7).